The following is a 177-amino-acid chain: Transcription antitermination protein NusB (177 aa).

Residues 1–35 (MTDSTHPTPSARPPRQPRTGTTGTGARKAGSKSGR) are disordered. Positions 17 to 28 (PRTGTTGTGARK) are enriched in low complexity.

Belongs to the NusB family.

Involved in transcription antitermination. Required for transcription of ribosomal RNA (rRNA) genes. Binds specifically to the boxA antiterminator sequence of the ribosomal RNA (rrn) operons. This Acidovorax sp. (strain JS42) protein is Transcription antitermination protein NusB.